Reading from the N-terminus, the 452-residue chain is Bifunctional protein GlmU (452 aa).

Positions 1-226 (MSLDIVILAA…AMEVQGANDR (226 aa)) are pyrophosphorylase. UDP-N-acetyl-alpha-D-glucosamine is bound by residues 8 to 11 (LAAG), K22, Q73, 78 to 79 (GT), 99 to 101 (YGD), G136, E151, N166, and N224. D101 serves as a coordination point for Mg(2+). N224 lines the Mg(2+) pocket. The linker stretch occupies residues 227-247 (IQLAELERHYQLRAARRLMAQ). Positions 248 to 452 (GVTLRDPARF…IDGWQRPTKK (205 aa)) are N-acetyltransferase. Residues R330 and K348 each coordinate UDP-N-acetyl-alpha-D-glucosamine. H360 acts as the Proton acceptor in catalysis. UDP-N-acetyl-alpha-D-glucosamine contacts are provided by Y363 and N374. Acetyl-CoA contacts are provided by residues A377, 383–384 (NY), S402, A420, and R437.

In the N-terminal section; belongs to the N-acetylglucosamine-1-phosphate uridyltransferase family. The protein in the C-terminal section; belongs to the transferase hexapeptide repeat family. In terms of assembly, homotrimer. Mg(2+) is required as a cofactor.

The protein localises to the cytoplasm. The enzyme catalyses alpha-D-glucosamine 1-phosphate + acetyl-CoA = N-acetyl-alpha-D-glucosamine 1-phosphate + CoA + H(+). The catalysed reaction is N-acetyl-alpha-D-glucosamine 1-phosphate + UTP + H(+) = UDP-N-acetyl-alpha-D-glucosamine + diphosphate. Its pathway is nucleotide-sugar biosynthesis; UDP-N-acetyl-alpha-D-glucosamine biosynthesis; N-acetyl-alpha-D-glucosamine 1-phosphate from alpha-D-glucosamine 6-phosphate (route II): step 2/2. The protein operates within nucleotide-sugar biosynthesis; UDP-N-acetyl-alpha-D-glucosamine biosynthesis; UDP-N-acetyl-alpha-D-glucosamine from N-acetyl-alpha-D-glucosamine 1-phosphate: step 1/1. It participates in bacterial outer membrane biogenesis; LPS lipid A biosynthesis. Its function is as follows. Catalyzes the last two sequential reactions in the de novo biosynthetic pathway for UDP-N-acetylglucosamine (UDP-GlcNAc). The C-terminal domain catalyzes the transfer of acetyl group from acetyl coenzyme A to glucosamine-1-phosphate (GlcN-1-P) to produce N-acetylglucosamine-1-phosphate (GlcNAc-1-P), which is converted into UDP-GlcNAc by the transfer of uridine 5-monophosphate (from uridine 5-triphosphate), a reaction catalyzed by the N-terminal domain. The sequence is that of Bifunctional protein GlmU from Stutzerimonas stutzeri (strain A1501) (Pseudomonas stutzeri).